The sequence spans 571 residues: Proline--tRNA ligase (571 aa).

It belongs to the class-II aminoacyl-tRNA synthetase family. ProS type 1 subfamily. As to quaternary structure, homodimer.

It localises to the cytoplasm. It carries out the reaction tRNA(Pro) + L-proline + ATP = L-prolyl-tRNA(Pro) + AMP + diphosphate. Catalyzes the attachment of proline to tRNA(Pro) in a two-step reaction: proline is first activated by ATP to form Pro-AMP and then transferred to the acceptor end of tRNA(Pro). As ProRS can inadvertently accommodate and process non-cognate amino acids such as alanine and cysteine, to avoid such errors it has two additional distinct editing activities against alanine. One activity is designated as 'pretransfer' editing and involves the tRNA(Pro)-independent hydrolysis of activated Ala-AMP. The other activity is designated 'posttransfer' editing and involves deacylation of mischarged Ala-tRNA(Pro). The misacylated Cys-tRNA(Pro) is not edited by ProRS. This chain is Proline--tRNA ligase, found in Acinetobacter baumannii (strain ATCC 17978 / DSM 105126 / CIP 53.77 / LMG 1025 / NCDC KC755 / 5377).